The sequence spans 61 residues: Large ribosomal subunit protein uL30 (61 aa).

Belongs to the universal ribosomal protein uL30 family. As to quaternary structure, part of the 50S ribosomal subunit.

This Colwellia psychrerythraea (strain 34H / ATCC BAA-681) (Vibrio psychroerythus) protein is Large ribosomal subunit protein uL30.